Here is a 440-residue protein sequence, read N- to C-terminus: Thymidine phosphorylase (440 aa).

This sequence belongs to the thymidine/pyrimidine-nucleoside phosphorylase family. Homodimer.

It carries out the reaction thymidine + phosphate = 2-deoxy-alpha-D-ribose 1-phosphate + thymine. It participates in pyrimidine metabolism; dTMP biosynthesis via salvage pathway; dTMP from thymine: step 1/2. In terms of biological role, the enzymes which catalyze the reversible phosphorolysis of pyrimidine nucleosides are involved in the degradation of these compounds and in their utilization as carbon and energy sources, or in the rescue of pyrimidine bases for nucleotide synthesis. This chain is Thymidine phosphorylase, found in Salmonella agona (strain SL483).